Reading from the N-terminus, the 98-residue chain is NADH-ubiquinone oxidoreductase chain 4L (98 aa).

3 helical membrane-spanning segments follow: residues 1–21, 29–49, and 61–81; these read MSMV…GLLM, SLLC…VTIL, and IILL…LVMV.

It belongs to the complex I subunit 4L family. In terms of assembly, core subunit of respiratory chain NADH dehydrogenase (Complex I) which is composed of 45 different subunits.

The protein resides in the mitochondrion inner membrane. The catalysed reaction is a ubiquinone + NADH + 5 H(+)(in) = a ubiquinol + NAD(+) + 4 H(+)(out). Core subunit of the mitochondrial membrane respiratory chain NADH dehydrogenase (Complex I) which catalyzes electron transfer from NADH through the respiratory chain, using ubiquinone as an electron acceptor. Part of the enzyme membrane arm which is embedded in the lipid bilayer and involved in proton translocation. This is NADH-ubiquinone oxidoreductase chain 4L (MT-ND4L) from Eumetopias jubatus (Steller sea lion).